The following is a 228-amino-acid chain: Ribulose-phosphate 3-epimerase (228 aa).

Serine 9 contributes to the substrate binding site. A divalent metal cation-binding residues include histidine 34, aspartate 36, and histidine 70. Aspartate 36 acts as the Proton acceptor in catalysis. Residues histidine 70, 146–149 (GKGG), 175–177 (DGG), and 197–198 (GT) contribute to the substrate site. Aspartate 175 contributes to the a divalent metal cation binding site. Aspartate 175 serves as the catalytic Proton donor.

Belongs to the ribulose-phosphate 3-epimerase family. Co(2+) is required as a cofactor. Requires Fe(2+) as cofactor. It depends on Mn(2+) as a cofactor. Zn(2+) serves as cofactor.

The catalysed reaction is D-ribulose 5-phosphate = D-xylulose 5-phosphate. Its pathway is carbohydrate degradation; pentose phosphate pathway; D-xylulose 5-phosphate from D-ribulose 5-phosphate (non-oxidative stage): step 1/1. Its function is as follows. Catalyzes the reversible epimerization of D-ribulose 5-phosphate to D-xylulose 5-phosphate. In Schizosaccharomyces pombe (strain 972 / ATCC 24843) (Fission yeast), this protein is Ribulose-phosphate 3-epimerase.